Reading from the N-terminus, the 117-residue chain is Putative membrane protein insertion efficiency factor (117 aa).

The protein belongs to the UPF0161 family.

Its subcellular location is the cell inner membrane. In terms of biological role, could be involved in insertion of integral membrane proteins into the membrane. This Helicobacter pylori (strain ATCC 700392 / 26695) (Campylobacter pylori) protein is Putative membrane protein insertion efficiency factor.